Reading from the N-terminus, the 361-residue chain is Peptide chain release factor 1 (361 aa).

Gln238 carries the N5-methylglutamine modification.

It belongs to the prokaryotic/mitochondrial release factor family. In terms of processing, methylated by PrmC. Methylation increases the termination efficiency of RF1.

The protein resides in the cytoplasm. In terms of biological role, peptide chain release factor 1 directs the termination of translation in response to the peptide chain termination codons UAG and UAA. The polypeptide is Peptide chain release factor 1 (Mesomycoplasma hyopneumoniae (strain J / ATCC 25934 / NCTC 10110) (Mycoplasma hyopneumoniae)).